A 63-amino-acid chain; its full sequence is Large ribosomal subunit protein uL29 (63 aa).

This sequence belongs to the universal ribosomal protein uL29 family.

The sequence is that of Large ribosomal subunit protein uL29 from Vibrio parahaemolyticus serotype O3:K6 (strain RIMD 2210633).